Consider the following 204-residue polypeptide: Ras-related protein Rab-7L1 (204 aa).

GTP contacts are provided by Ser-33, Lys-34, His-35, Tyr-36, Lys-37, and Thr-39. An Effector region motif is present at residues 36-44 (YKSTVGVDF). Thr-71 carries the post-translational modification Phosphothreonine; by LRRK2. At Ser-72 the chain carries Phosphoserine. Lys-126, Val-156, and Lys-157 together coordinate GTP. 2 S-geranylgeranyl cysteine lipidation sites follow: Cys-203 and Cys-204.

The protein belongs to the small GTPase superfamily. Rab family. In terms of assembly, interacts with LRRK2 (via the N-terminus); this interaction is direct and stimulates kinase activity.

It is found in the cell membrane. It localises to the cytoplasm. Its subcellular location is the perinuclear region. The protein localises to the golgi apparatus. The protein resides in the golgi apparatus membrane. It is found in the trans-Golgi network. It localises to the cytoskeleton. The small GTPases Rab are key regulators in vesicle trafficking. Essential for maintaining the integrity of endosome-trans-Golgi network structure. Together with LRRK2, plays a role in the retrograde trafficking pathway for recycling proteins, such as mannose 6 phosphate receptor (M6PR), between lysosomes and the Golgi apparatus in a retromer-dependent manner. Recruits LRRK2 to the Golgi apparatus and stimulates LRRK2 kinase activity. Stimulates phosphorylation of RAB10 'Thr-73' by LRRK2. Also regulates neuronal process morphology in the intact central nervous system (CNS). In Mus musculus (Mouse), this protein is Ras-related protein Rab-7L1 (Rab29).